Reading from the N-terminus, the 649-residue chain is UvrABC system protein C (649 aa).

In terms of domain architecture, GIY-YIG spans 12-91 (SSPGVYLMKS…IKQHRPKYNI (80 aa)). A UVR domain is found at 201-236 (NEVARLYRSKMNLASEQMRYEDAARYRDLLRAIEVT). The tract at residues 603–649 (RLHGGPLPNPPPPGEGAMGDGSIPSPRNGVMDDSIPSPSGRGWPKAG) is disordered.

It belongs to the UvrC family. Interacts with UvrB in an incision complex.

It localises to the cytoplasm. Its function is as follows. The UvrABC repair system catalyzes the recognition and processing of DNA lesions. UvrC both incises the 5' and 3' sides of the lesion. The N-terminal half is responsible for the 3' incision and the C-terminal half is responsible for the 5' incision. In Geobacter sp. (strain M21), this protein is UvrABC system protein C.